Reading from the N-terminus, the 110-residue chain is Small ribosomal subunit protein bS6 (110 aa).

This sequence belongs to the bacterial ribosomal protein bS6 family.

Binds together with bS18 to 16S ribosomal RNA. This Aquifex aeolicus (strain VF5) protein is Small ribosomal subunit protein bS6 (rpsF).